Reading from the N-terminus, the 133-residue chain is DVELKGKGGENEGFVGLKAQRNLYEDDRTSLSGTVKGQSQWKDPYPAQHAGMARLDGTRTLIENDRTKVTGSGFAQREVATGMRPHDSFGVGVEATHNIYKGKNGEVDVFGGVQRQWNTPDRHQARGGIRWRF.

In terms of biological role, antibacterial peptide. Affects Gram-negative bacteria. The chain is Hemiptericin from Pyrrhocoris apterus (Sap sucking bug).